The chain runs to 128 residues: Small ribosomal subunit protein eS8 (128 aa).

The protein belongs to the eukaryotic ribosomal protein eS8 family. As to quaternary structure, part of the 30S ribosomal subunit.

This chain is Small ribosomal subunit protein eS8, found in Methanococcus maripaludis (strain C6 / ATCC BAA-1332).